Consider the following 101-residue polypeptide: Small ribosomal subunit protein uS14 (101 aa).

It belongs to the universal ribosomal protein uS14 family. In terms of assembly, part of the 30S ribosomal subunit. Contacts proteins S3 and S10.

In terms of biological role, binds 16S rRNA, required for the assembly of 30S particles and may also be responsible for determining the conformation of the 16S rRNA at the A site. The sequence is that of Small ribosomal subunit protein uS14 from Francisella tularensis subsp. tularensis (strain FSC 198).